The primary structure comprises 236 residues: 7-cyano-7-deazaguanine synthase (236 aa).

7 to 17 (CSGGLDSVSLA) is a binding site for ATP. Residues Cys185, Cys193, Cys196, and Cys199 each contribute to the Zn(2+) site.

It belongs to the QueC family. Requires Zn(2+) as cofactor.

The catalysed reaction is 7-carboxy-7-deazaguanine + NH4(+) + ATP = 7-cyano-7-deazaguanine + ADP + phosphate + H2O + H(+). Its pathway is purine metabolism; 7-cyano-7-deazaguanine biosynthesis. In terms of biological role, catalyzes the ATP-dependent conversion of 7-carboxy-7-deazaguanine (CDG) to 7-cyano-7-deazaguanine (preQ(0)). The protein is 7-cyano-7-deazaguanine synthase of Rhizobium leguminosarum bv. trifolii (strain WSM2304).